Here is a 384-residue protein sequence, read N- to C-terminus: S-adenosylmethionine synthase (384 aa).

H15 lines the ATP pocket. A Mg(2+)-binding site is contributed by D17. E43 lines the K(+) pocket. E56 and Q99 together coordinate L-methionine. Residues 99-109 (QSPDINQGVDR) form a flexible loop region. Residues 164–166 (DAK), 230–231 (RF), D239, 245–246 (RK), A262, and K266 contribute to the ATP site. Residue D239 coordinates L-methionine. Position 270 (K270) interacts with L-methionine.

It belongs to the AdoMet synthase family. Homotetramer; dimer of dimers. The cofactor is Mg(2+). K(+) serves as cofactor.

The protein localises to the cytoplasm. It carries out the reaction L-methionine + ATP + H2O = S-adenosyl-L-methionine + phosphate + diphosphate. Its pathway is amino-acid biosynthesis; S-adenosyl-L-methionine biosynthesis; S-adenosyl-L-methionine from L-methionine: step 1/1. Catalyzes the formation of S-adenosylmethionine (AdoMet) from methionine and ATP. The overall synthetic reaction is composed of two sequential steps, AdoMet formation and the subsequent tripolyphosphate hydrolysis which occurs prior to release of AdoMet from the enzyme. The polypeptide is S-adenosylmethionine synthase (Salmonella arizonae (strain ATCC BAA-731 / CDC346-86 / RSK2980)).